A 461-amino-acid polypeptide reads, in one-letter code: L-seryl-tRNA(Sec) selenium transferase (461 aa).

Position 294 is an N6-(pyridoxal phosphate)lysine (Lys294).

It belongs to the SelA family. Pyridoxal 5'-phosphate is required as a cofactor.

It localises to the cytoplasm. The catalysed reaction is L-seryl-tRNA(Sec) + selenophosphate + H(+) = L-selenocysteinyl-tRNA(Sec) + phosphate. The protein operates within aminoacyl-tRNA biosynthesis; selenocysteinyl-tRNA(Sec) biosynthesis; selenocysteinyl-tRNA(Sec) from L-seryl-tRNA(Sec) (bacterial route): step 1/1. Functionally, converts seryl-tRNA(Sec) to selenocysteinyl-tRNA(Sec) required for selenoprotein biosynthesis. The protein is L-seryl-tRNA(Sec) selenium transferase of Haemophilus influenzae (strain ATCC 51907 / DSM 11121 / KW20 / Rd).